The sequence spans 642 residues: Threonine--tRNA ligase (642 aa).

Residues 1 to 61 (MPVITLPDGS…EHDAQIAIIT (61 aa)) form the TGS domain. The tract at residues 243–534 (DHRKIGKQLD…LTEEYAGFYP (292 aa)) is catalytic. The Zn(2+) site is built by C334, H385, and H511.

Belongs to the class-II aminoacyl-tRNA synthetase family. As to quaternary structure, homodimer. Zn(2+) serves as cofactor.

The protein localises to the cytoplasm. The catalysed reaction is tRNA(Thr) + L-threonine + ATP = L-threonyl-tRNA(Thr) + AMP + diphosphate + H(+). Its function is as follows. Catalyzes the attachment of threonine to tRNA(Thr) in a two-step reaction: L-threonine is first activated by ATP to form Thr-AMP and then transferred to the acceptor end of tRNA(Thr). Also edits incorrectly charged L-seryl-tRNA(Thr). The protein is Threonine--tRNA ligase of Sodalis glossinidius (strain morsitans).